A 768-amino-acid polypeptide reads, in one-letter code: MESEKPKKTQEMKTDLKLLLECLKYHMGNPLSQKEVLITIHSVCKQNSDAGIYFREIGGLMFIINLAKSSEQSLVKEAALYTLGSIAEENVYCQQSLCTSELFQDLTGLLTNDDSNTNLKRMSVYVLLVLVSNNRNGQTLVREVGCIEVLSQMFRTVLSNYELNLSDNSVFQSYLLWSSVCSTLCVCVNNPQNDENQMLCCSLFPCVNEWLMNCMRPEVIRPICSFIGLTLANNTHAQNCFVSSGGLDVLCQVLVQLESDSHNTLSSAKLAVIVTKTMDACITDNSAAFTVVLSKYHIVSTLLALLLHESLDSREKFSIILAIGHCTEDCEKNQYELLKNNGLPLMIQALTEFKNEDLSKAATYVLHNCKKITGKLSLSLGQNSFGENEIELKDISEKETLREHWKAAKEILCRIKQFEKGGKEEKQQNRSGHYKDNTPSMKVNIQTNLKRLCADSTGGTRAEDKDINQSRELRSYKPSEIMSKACANENQLTTRKKNTNPVHPFCKEKGQSKIVHETTPSCAQNLDKEKTFDQKDSVSQSSDQVLKHLPHTVKNRKQVPETDPFTLCLDIIDREVGIQATDSCSRMLKYTCSGCIVARKLLNSRNFSKFLHSCAYQCVHHKVIMEAEDKYKNELRKTFICAKKILLTPCRRRQLCKESTASEELKIVHQKPDSKKLPGLEAQALNTSIPEAMERRSPVPGQSGLHKKRRIRKDFTKEEVNYLFHGVKTMGNHWNSILWSFPFQKGRRAVDLAHKYHRLIKGPSCAAL.

ARM repeat units follow at residues 101–145 and 341–384; these read ELFQ…REVG and NGLP…GQNS. Residues 399–448 adopt a coiled-coil conformation; sequence ETLREHWKAAKEILCRIKQFEKGGKEEKQQNRSGHYKDNTPSMKVNIQTN. Basic and acidic residues-rich tracts occupy residues 422–436 and 461–475; these read GKEEKQQNRSGHYKD and RAEDKDINQSRELRS. 2 disordered regions span residues 422-441 and 454-475; these read GKEEKQQNRSGHYKDNTPSM and ADSTGGTRAEDKDINQSRELRS. The segment at 524–700 is interaction with TERF1; it reads QNLDKEKTFD…EAMERRSPVP (177 aa). Thr648 is subject to Phosphothreonine. The 54-residue stretch at 707 to 760 folds into the Myb-like domain; it reads KKRRIRKDFTKEEVNYLFHGVKTMGNHWNSILWSFPFQKGRRAVDLAHKYHRLI.

The protein belongs to the TERB1 family. Component of the MAJIN-TERB1-TERB2 complex, composed of MAJIN, TERB1 and TERB2. Interacts with TERF1, STAG3 and SUN1. Interacts (via Myb-like domain) with the cohesin complex; probably mediated via interaction with STAG3. In terms of processing, phosphorylated by CDK. Phosphorylation by CDK takes place in late prophase when the cap exchange is prominent. is important for the stabilization of telomere attachment but dispenable for the cap exchange. As to expression, expressed in testis and fetal oocytes.

It is found in the chromosome. It localises to the telomere. The protein resides in the nucleus inner membrane. Functionally, meiosis-specific telomere-associated protein involved in meiotic telomere attachment to the nucleus inner membrane, a crucial step for homologous pairing and synapsis. Component of the MAJIN-TERB1-TERB2 complex, which promotes telomere cap exchange by mediating attachment of telomeric DNA to the inner nuclear membrane and replacement of the protective cap of telomeric chromosomes: in early meiosis, the MAJIN-TERB1-TERB2 complex associates with telomeric DNA and the shelterin/telosome complex. During prophase, the complex matures and promotes release of the shelterin/telosome complex from telomeric DNA. In the MAJIN-TERB1-TERB2 complex, TERB1 probably mediates association with the shelterin/telosome complex via interaction with TERF1, promoting priming telomeric DNA attachment'. Promotes telomere association with the nuclear envelope and deposition of the SUN-KASH/LINC complex. Also recruits cohesin to telomeres to develop structural rigidity. The sequence is that of Telomere repeats-binding bouquet formation protein 1 from Mus musculus (Mouse).